A 50-amino-acid chain; its full sequence is Small ribosomal subunit protein uS14 (50 aa).

Residues Cys-15, Cys-18, Cys-33, and Cys-36 each contribute to the Zn(2+) site.

This sequence belongs to the universal ribosomal protein uS14 family. Zinc-binding uS14 subfamily. As to quaternary structure, part of the 30S ribosomal subunit. It depends on Zn(2+) as a cofactor.

Binds 16S rRNA, required for the assembly of 30S particles. The polypeptide is Small ribosomal subunit protein uS14 (Methanosarcina acetivorans (strain ATCC 35395 / DSM 2834 / JCM 12185 / C2A)).